A 293-amino-acid polypeptide reads, in one-letter code: 4-hydroxy-tetrahydrodipicolinate synthase (293 aa).

A pyruvate-binding site is contributed by Thr-46. Catalysis depends on Tyr-134, which acts as the Proton donor/acceptor. Lys-162 (schiff-base intermediate with substrate) is an active-site residue. Ile-204 is a pyruvate binding site.

It belongs to the DapA family. In terms of assembly, homotetramer; dimer of dimers.

The protein localises to the cytoplasm. The enzyme catalyses L-aspartate 4-semialdehyde + pyruvate = (2S,4S)-4-hydroxy-2,3,4,5-tetrahydrodipicolinate + H2O + H(+). It participates in amino-acid biosynthesis; L-lysine biosynthesis via DAP pathway; (S)-tetrahydrodipicolinate from L-aspartate: step 3/4. Its function is as follows. Catalyzes the condensation of (S)-aspartate-beta-semialdehyde [(S)-ASA] and pyruvate to 4-hydroxy-tetrahydrodipicolinate (HTPA). This is 4-hydroxy-tetrahydrodipicolinate synthase from Bdellovibrio bacteriovorus (strain ATCC 15356 / DSM 50701 / NCIMB 9529 / HD100).